A 135-amino-acid chain; its full sequence is UPF0225 protein CV_3559 (135 aa).

The protein belongs to the UPF0225 family.

The chain is UPF0225 protein CV_3559 from Chromobacterium violaceum (strain ATCC 12472 / DSM 30191 / JCM 1249 / CCUG 213 / NBRC 12614 / NCIMB 9131 / NCTC 9757 / MK).